Here is an 80-residue protein sequence, read N- to C-terminus: MARCFVVLAFLALAAMSLQVATAQDDLKYFEREVVAELAAQILRVAQGPSAFVAGPHKRNSELINSLLGIPKVMNDAGRR.

The first 23 residues, 1–23 (MARCFVVLAFLALAAMSLQVATA), serve as a signal peptide directing secretion. A77 is subject to Alanine amide.

The protein belongs to the arthropod PDH family. As to expression, eyestalk.

It is found in the secreted. The pigment-dispersing hormone causes the migration of the distal retinal pigment into the proximal end of the pigment chromatophore cells and thus decreases the amount of light entering the retinulas. May also function as a neurotransmitter and/or neuromodulator. The polypeptide is Pigment-dispersing hormone type 2 (PDH2) (Penaeus vannamei (Whiteleg shrimp)).